We begin with the raw amino-acid sequence, 597 residues long: Protein GRISEA (597 aa).

A DNA-binding region (copper-fist) is located at residues 1-41; it reads MPIINGQKMACGPCIRGHRSTKCNHYNERVMVPVRKPGRPL. 4 residues coordinate Zn(2+): cysteine 11, cysteine 14, cysteine 23, and histidine 25. Disordered stretches follow at residues 70 to 115, 233 to 352, 407 to 428, and 467 to 541; these read PAGT…ASRR, AFVD…PGFG, SRPP…NGNN, and SPNS…SPAL. The span at 92–103 shows a compositional bias: polar residues; it reads SPASRTSSNRVT. Low complexity predominate over residues 104–115; sequence KSGSGSKSASRR. A compositionally biased stretch (gly residues) spans 269-281; that stretch reads GGSGGGGCCGGGK. Over residues 287 to 314 the composition is skewed to pro residues; sequence QAPPPVPAPLPTPPQQQMPNIMPPPQPQ. Residues 469-495 show a composition bias toward low complexity; sequence NSSHGNSGSADSSANASPSANPLNLAS. Residues 521–530 show a composition bias toward polar residues; that stretch reads ANESDGSSNA.

The protein localises to the nucleus. Its function is as follows. Copper-sensing transcription factor that regulates copper uptake by transactivation of Ctr3, a high affinity copper permease. Binds to the palindromic UAS sequence 5'-TGTTGCTCANNNNAGAGCAACT-3'. Also transactivates Sod2, a mitochondrial manganese superoxide dismutase through the palindromic UAS sequence 5'-GTTTGCTCA-3' with 352 bp separating the two inverted repeats. Loss of function indirectly leads to rearrangement of mitochondrial DNA associated with senescence in wild-type strains. This is Protein GRISEA from Podospora anserina (Pleurage anserina).